The chain runs to 66 residues: Ocellatin-PT2 (66 aa).

A signal peptide spans 1–22 (MAFLKKSLFLVLFLGLVSLSIC). Residues 23 to 39 (DEEKRQDEDDDDDDDEE) constitute a propeptide that is removed on maturation. Valine 66 is subject to Valine amide.

As to expression, expressed by the skin glands.

It localises to the secreted. In terms of biological role, has no antibacterial activity against Gram-negative bacteria E.coli ATCC 25922, S.pneumoniae ATCC 700603 and S.choleraesuis ATCC 14028 or against Gram-positive bacterium S.aureus ATCC 29313. Shows no hemolytic activity and no cytotoxicity. The chain is Ocellatin-PT2 from Leptodactylus pustulatus (Ceara white-lipped frog).